Consider the following 108-residue polypeptide: U-scoloptoxin(16)-Er10a (108 aa).

The N-terminal stretch at 1-24 is a signal peptide; it reads MASFTSFCVLFTFCLLLLAHQARS.

This sequence belongs to the scoloptoxin-16 family. Post-translationally, contains 4 disulfide bonds. Expressed by the venom gland.

The protein resides in the secreted. The polypeptide is U-scoloptoxin(16)-Er10a (Ethmostigmus rubripes (Giant centipede)).